Consider the following 321-residue polypeptide: MVKGSQKIVAVDQDIPIIDMSQERSQVSMQIVKACESLGFFKVINHGVDQTTISRMEQESINFFAKPAHEKKSVRPVNQPFRYGFRDIGLNGDSGEVEYLLFHTNDPAFRSQLSFSSAVNCYIEAVKQLAREILDLTAEGLHVPPHSFSRLISSVDSDSVLRVNHYPPSDQFFGEANLSDQSVSLTRVGFGEHTDPQILTVLRSNGVGGLQVSNSDGMWVSVSPDPSAFCVNVGDLLQVMTNGRFISVRHRALTYGEESRLSTAYFAGPPLQAKIGPLSAMVMTMNQPRLYQTFTWGEYKKRAYSLRLEDSRLDMFRTCKD.

The Fe2OG dioxygenase domain occupies 156–269; sequence DSDSVLRVNH…RLSTAYFAGP (114 aa). The Fe cation site is built by His193, Asp195, and His250. The active site involves Arg260.

Belongs to the iron/ascorbate-dependent oxidoreductase family. GA2OX subfamily. Requires Fe(2+) as cofactor. In terms of tissue distribution, expressed at the base of the shoot apical meristem and developing leaf primordia.

The enzyme catalyses gibberellin A1 + 2-oxoglutarate + O2 = gibberellin A8 + succinate + CO2. It participates in plant hormone biosynthesis; gibberellin biosynthesis. Its function is as follows. Catalyzes the 2-beta-hydroxylation of several biologically active gibberellins, leading to the homeostatic regulation of their endogenous level. Catabolism of gibberellins (GAs) plays a central role in plant development. Converts GA9/GA20 to GA51/GA29 and GA4/GA1 to GA34/GA8. The sequence is that of Gibberellin 2-beta-dioxygenase 4 (GA2OX4) from Arabidopsis thaliana (Mouse-ear cress).